Reading from the N-terminus, the 166-residue chain is ATP synthase subunit b 1 (166 aa).

The chain crosses the membrane as a helical span at residues 7 to 29 (FWTALAFVLFFVIFGRKLWVAIT).

Belongs to the ATPase B chain family. In terms of assembly, F-type ATPases have 2 components, F(1) - the catalytic core - and F(0) - the membrane proton channel. F(1) has five subunits: alpha(3), beta(3), gamma(1), delta(1), epsilon(1). F(0) has three main subunits: a(1), b(2) and c(10-14). The alpha and beta chains form an alternating ring which encloses part of the gamma chain. F(1) is attached to F(0) by a central stalk formed by the gamma and epsilon chains, while a peripheral stalk is formed by the delta and b chains.

The protein localises to the cell inner membrane. F(1)F(0) ATP synthase produces ATP from ADP in the presence of a proton or sodium gradient. F-type ATPases consist of two structural domains, F(1) containing the extramembraneous catalytic core and F(0) containing the membrane proton channel, linked together by a central stalk and a peripheral stalk. During catalysis, ATP synthesis in the catalytic domain of F(1) is coupled via a rotary mechanism of the central stalk subunits to proton translocation. Its function is as follows. Component of the F(0) channel, it forms part of the peripheral stalk, linking F(1) to F(0). This is ATP synthase subunit b 1 from Gluconobacter oxydans (strain 621H) (Gluconobacter suboxydans).